A 1456-amino-acid polypeptide reads, in one-letter code: Macrophage mannose receptor 1 (1456 aa).

The first 19 residues, 1 to 19 (MRLLLLLAFISVIPVSVQL), serve as a signal peptide directing secretion. Residues 20–1388 (LDARQFLIYN…DPQPKGSSKA (1369 aa)) lie on the Extracellular side of the membrane. The 121-residue stretch at 22-142 (ARQFLIYNED…SGLWSRWKVY (121 aa)) folds into the Ricin B-type lectin domain. 7 disulfide bridges follow: Cys35–Cys49, Cys74–Cys91, Cys102–Cys149, Cys168–Cys194, Cys182–Cys209, Cys247–Cys340, and Cys316–Cys332. N-linked (GlcNAc...) asparagine glycosylation occurs at Asn104. The region spanning 163–211 (ANGAVCAFPFKFENKWYADCTSAGRSDGWLWCGTTTDYDKDKLFGFCPL) is the Fibronectin type-II domain. The region spanning 225-341 (LTGILYQINS…CVQKLGYICK (117 aa)) is the C-type lectin 1 domain. Residue Asn344 is glycosylated (N-linked (GlcNAc...) asparagine). C-type lectin domains lie at 369–487 (YAGH…YICK), 511–626 (HGFY…FVCK), 655–778 (KTSM…WICQ), and 807–923 (YKDY…FICQ). Intrachain disulfides connect Cys391–Cys486 and Cys463–Cys478. Asn529 is a glycosylation site (N-linked (GlcNAc...) asparagine). Intrachain disulfides connect Cys532–Cys625, Cys600–Cys617, Cys680–Cys777, Cys753–Cys769, Cys828–Cys922, and Cys899–Cys914. Asn926 and Asn930 each carry an N-linked (GlcNAc...) asparagine glycan. 3 C-type lectin domains span residues 951–1079 (YKNK…YICQ), 1101–1212 (YGKS…FLCK), and 1240–1355 (FYGH…FICK). 6 disulfides stabilise this stretch: Cys976-Cys1078, Cys1051-Cys1070, Cys1122-Cys1211, Cys1189-Cys1203, Cys1262-Cys1354, and Cys1331-Cys1346. Residue Asn1159 is glycosylated (N-linked (GlcNAc...) asparagine). Residue Asn1204 is glycosylated (N-linked (GlcNAc...) asparagine). Residues 1389–1409 (AGVVTVVLLIVIGAGVAAYFF) traverse the membrane as a helical segment. Topologically, residues 1410–1456 (YKKRHALHIPQEATFENTLYFNSNLSPGTSDTKDLMGNIEQNEHAII) are cytoplasmic.

In terms of tissue distribution, detected in macrophages.

The protein resides in the endosome membrane. It localises to the cell membrane. Functionally, mediates the endocytosis of glycoproteins by macrophages. Binds both sulfated and non-sulfated polysaccharide chains. Acts as phagocytic receptor for bacteria, fungi and other pathogens. The polypeptide is Macrophage mannose receptor 1 (Mrc1) (Mus musculus (Mouse)).